Consider the following 340-residue polypeptide: Adenosine deaminase-like protein (340 aa).

Zn(2+)-binding residues include histidine 14 and histidine 16. N(6)-methyl-AMP contacts are provided by residues histidine 16, asparagine 18, histidine 68, 100-103 (TTPK), and glycine 173. Histidine 200 is a binding site for Zn(2+). N(6)-methyl-AMP contacts are provided by glutamate 203, aspartate 278, and aspartate 279. The active-site Proton donor is the glutamate 203. A Zn(2+)-binding site is contributed by aspartate 278.

Belongs to the metallo-dependent hydrolases superfamily. Adenosine and AMP deaminases family. In terms of assembly, monomer. Zn(2+) serves as cofactor.

The enzyme catalyses N(6)-methyl-AMP + H2O + H(+) = IMP + methylamine. Catalyzes the hydrolysis of the free cytosolic methylated adenosine nucleotide N(6)-methyl-AMP (N6-mAMP) to produce inositol monophosphate (IMP) and methylamine. Is required for the catabolism of cytosolic N6-mAMP, which is derived from the degradation of mRNA containing N6-methylated adenine (m6A). In Drosophila pseudoobscura pseudoobscura (Fruit fly), this protein is Adenosine deaminase-like protein.